We begin with the raw amino-acid sequence, 438 residues long: Actin-like protein 7A (438 aa).

Residues 36-56 (ASLKDGPAKRAVWVRRDHSEP) are required for interaction with TES.

It belongs to the actin family. In terms of assembly, interacts (via N-terminus) with TES (via LIM domain 2). Heterodimer with TES; the heterodimer interacts with ENAH to form a heterotrimer. Interacts with ACTL9. Interacts with CYLC1; the interaction may be relevant for proper acrosome attachment to the nuclear envelope.

It is found in the cytoplasm. It localises to the cytoskeleton. Its subcellular location is the golgi apparatus. The protein localises to the nucleus. In terms of biological role, essential for normal spermatogenesis and male fertility. Required for normal sperm head morphology, acroplaxome formation, acrosome attachment, and acrosome granule stability. May anchor and stabilize acrosomal adherence to the acroplaxome at least in part by facilitating the presence of F-actin in the subacrosomal space. May play an important role in formation and fusion of Golgi-derived vesicles during acrosome biogenesis. In Bos taurus (Bovine), this protein is Actin-like protein 7A (ACTL7A).